The following is a 180-amino-acid chain: Ribulose bisphosphate carboxylase small subunit, chloroplastic 3 (180 aa).

Residues 1–56 (MASSVMSSAAVATRGNGAQASMVAPFTGLKSTASFPVSRKQNLDITSIASNGGRVS) constitute a chloroplast transit peptide.

The protein belongs to the RuBisCO small chain family. Heterohexadecamer of 8 large and 8 small subunits. As to quaternary structure, (Microbial infection) Binds to tobamovirus movement protein; this interaction seems required for viral systemic movement.

It localises to the plastid. Its subcellular location is the chloroplast. The protein resides in the cell junction. The protein localises to the plasmodesma. RuBisCO catalyzes two reactions: the carboxylation of D-ribulose 1,5-bisphosphate, the primary event in carbon dioxide fixation, as well as the oxidative fragmentation of the pentose substrate. Both reactions occur simultaneously and in competition at the same active site. Although the small subunit is not catalytic it is essential for maximal activity. Involved in antiviral defenses. The protein is Ribulose bisphosphate carboxylase small subunit, chloroplastic 3 of Solanum lycopersicum (Tomato).